We begin with the raw amino-acid sequence, 147 residues long: 16 kDa heat shock protein B (147 aa).

The sHSP domain maps to 29-141; that stretch reads NEAGSTYPPY…APSAFRSAAA (113 aa).

This sequence belongs to the small heat shock protein (HSP20) family.

The polypeptide is 16 kDa heat shock protein B (ibpB) (Azotobacter vinelandii).